A 130-amino-acid chain; its full sequence is Small ribosomal subunit protein uS11 (130 aa).

It belongs to the universal ribosomal protein uS11 family. As to quaternary structure, part of the 30S ribosomal subunit. Interacts with proteins S7 and S18. Binds to IF-3.

In terms of biological role, located on the platform of the 30S subunit, it bridges several disparate RNA helices of the 16S rRNA. Forms part of the Shine-Dalgarno cleft in the 70S ribosome. This chain is Small ribosomal subunit protein uS11, found in Shewanella denitrificans (strain OS217 / ATCC BAA-1090 / DSM 15013).